The following is a 162-amino-acid chain: Serine-protein kinase RsbW (162 aa).

Belongs to the anti-sigma-factor family.

The catalysed reaction is L-seryl-[protein] + ATP = O-phospho-L-seryl-[protein] + ADP + H(+). It carries out the reaction L-threonyl-[protein] + ATP = O-phospho-L-threonyl-[protein] + ADP + H(+). In terms of biological role, negative regulator of sigma-B activity. Phosphorylates and inactivates its specific antagonist protein, RsbV. Upon phosphorylation of RsbV, RsbW is released and binds to sigma-B, thereby blocking its ability to form an RNA polymerase holoenzyme (E-sigma-B). The sequence is that of Serine-protein kinase RsbW from Halalkalibacterium halodurans (strain ATCC BAA-125 / DSM 18197 / FERM 7344 / JCM 9153 / C-125) (Bacillus halodurans).